A 457-amino-acid chain; its full sequence is Protein translocase subunit SecY (457 aa).

The Cytoplasmic portion of the chain corresponds to 1–20 (MGVIDVLAAVGERFPAVRKP). The chain crosses the membrane as a helical span at residues 21–47 (ERKPTLYRRLAWTGVILVLYFIMSNIP). Topologically, residues 48–59 (LYGIPPQNIGGQ) are extracellular. An intramembrane region (helical) is located at residues 60-67 (VDLQRIIF). Residues 60–88 (VDLQRIIFASSAGTLMELGIGPIVTASLI) traverse the membrane as a discontinuously helical segment. The stretch at 68-79 (ASSAGTLMELGI) is an intramembrane region. The segment at residues 80 to 88 (GPIVTASLI) is an intramembrane region (helical). Residues 89 to 109 (IQVLVGAKIIKLDLADPEGRR) lie on the Cytoplasmic side of the membrane. The helical transmembrane segment at 110–134 (KFTSAQKVLALAFAALEAVAFTVGG) threads the bilayer. The Extracellular portion of the chain corresponds to 135 to 146 (RYWVGTAIEPGP). Residues 147–171 (LDYALVSLQLFLGALLVIYFDEVMQ) traverse the membrane as a helical segment. Over 172–178 (KGWGIGS) the chain is Cytoplasmic. Residues 179–197 (AISLFILAGVAQGVVWSIF) traverse the membrane as a helical segment. Residues 198-229 (GTIPGVAQDYGLVPAIISNPDLTLLARPNGFP) are Extracellular-facing. The helical transmembrane segment at 230 to 251 (DLTGFFTTLAAIILLVYLQAMR) threads the bilayer. Topologically, residues 252-276 (VEIPITSERFKGIRSRVPLQFIYVT) are cytoplasmic. Residues 277–298 (NIPILLVGILVSDLLLVQRLLA) traverse the membrane as a helical segment. Topologically, residues 299–332 (DYLGVESRAYQIYSSIVYYLSPPRGVVQSIADPV) are extracellular. A helical membrane pass occupies residues 333-352 (KTAVFIASWTVLSIVFGYMW). Topologically, residues 353 to 395 (VEIAGLNPREQAERLIKGGLAIPGMRSDPRVLERVLRRYIYPL) are cytoplasmic. Residues 396–414 (TFLSSLIVAALVIVADIFG) traverse the membrane as a helical segment. The Extracellular portion of the chain corresponds to 415-417 (AYG). The chain crosses the membrane as a helical span at residues 418 to 432 (TGTGLLLAVGIINQY). Residues 433–457 (YAMITRERALETYPLLRRILGEEVV) are Cytoplasmic-facing.

The protein belongs to the SecY/SEC61-alpha family. Component of the Sec protein translocase complex. Heterotrimer consisting of alpha (SecY), beta (SecG) and gamma (SecE) subunits. The heterotrimers can form oligomers, although 1 heterotrimer is thought to be able to translocate proteins. Interacts with the ribosome. May interact with SecDF, and other proteins may be involved.

Its subcellular location is the cell membrane. The central subunit of the protein translocation channel SecYEG. Consists of two halves formed by TMs 1-5 and 6-10. These two domains form a lateral gate at the front which open onto the bilayer between TMs 2 and 7, and are clamped together by SecE at the back. The channel is closed by both a pore ring composed of hydrophobic SecY resides and a short helix (helix 2A) on the extracellular side of the membrane which forms a plug. The plug probably moves laterally to allow the channel to open. The ring and the pore may move independently. This chain is Protein translocase subunit SecY, found in Aeropyrum pernix (strain ATCC 700893 / DSM 11879 / JCM 9820 / NBRC 100138 / K1).